The sequence spans 394 residues: NADH dehydrogenase [ubiquinone] iron-sulfur protein 2 (394 aa).

The segment covering 1–16 (MTTKNRQIKNFTSNFG) has biased composition (polar residues). A disordered region spans residues 1 to 22 (MTTKNRQIKNFTSNFGPQHPAA).

Belongs to the complex I 49 kDa subunit family. As to quaternary structure, complex I is composed of about 45 different subunits. This is a component of the iron-sulfur (IP) fragment of the enzyme.

It is found in the mitochondrion. It carries out the reaction a ubiquinone + NADH + 5 H(+)(in) = a ubiquinol + NAD(+) + 4 H(+)(out). Functionally, core subunit of the mitochondrial membrane respiratory chain NADH dehydrogenase (Complex I) that is believed to belong to the minimal assembly required for catalysis. Complex I functions in the transfer of electrons from NADH to the respiratory chain. The immediate electron acceptor for the enzyme is believed to be ubiquinone. Component of the iron-sulfur (IP) fragment of the enzyme. The protein is NADH dehydrogenase [ubiquinone] iron-sulfur protein 2 (NAD7) of Nicotiana sylvestris (Wood tobacco).